A 78-amino-acid chain; its full sequence is Probable [Fe-S]-dependent transcriptional repressor (78 aa).

The iron-sulfur cluster site is built by cysteine 56, cysteine 61, cysteine 64, and cysteine 70.

It belongs to the FeoC family.

In terms of biological role, may function as a transcriptional regulator that controls feoABC expression. The polypeptide is Probable [Fe-S]-dependent transcriptional repressor (Salmonella heidelberg (strain SL476)).